A 556-amino-acid chain; its full sequence is Formate--tetrahydrofolate ligase (556 aa).

65-72 (TPAGEGKS) provides a ligand contact to ATP.

This sequence belongs to the formate--tetrahydrofolate ligase family.

The enzyme catalyses (6S)-5,6,7,8-tetrahydrofolate + formate + ATP = (6R)-10-formyltetrahydrofolate + ADP + phosphate. Its pathway is one-carbon metabolism; tetrahydrofolate interconversion. This chain is Formate--tetrahydrofolate ligase, found in Streptococcus agalactiae serotype Ia (strain ATCC 27591 / A909 / CDC SS700).